A 170-amino-acid polypeptide reads, in one-letter code: Bifunctional protein PyrR (170 aa).

The PRPP-binding motif lies at leucine 90–threonine 102.

It belongs to the purine/pyrimidine phosphoribosyltransferase family. PyrR subfamily.

The enzyme catalyses UMP + diphosphate = 5-phospho-alpha-D-ribose 1-diphosphate + uracil. In terms of biological role, regulates the transcription of the pyrimidine nucleotide (pyr) operon in response to exogenous pyrimidines. Its function is as follows. Also displays a weak uracil phosphoribosyltransferase activity which is not physiologically significant. In Pseudomonas syringae pv. syringae (strain B728a), this protein is Bifunctional protein PyrR.